A 2262-amino-acid polypeptide reads, in one-letter code: Protein Ycf2 (2262 aa).

1607 to 1614 (GFIGTGRS) lines the ATP pocket.

Belongs to the Ycf2 family.

The protein resides in the plastid. Its subcellular location is the chloroplast stroma. Probable ATPase of unknown function. Its presence in a non-photosynthetic plant (Epifagus virginiana) and experiments in tobacco indicate that it has an essential function which is probably not related to photosynthesis. In Nuphar advena (Common spatterdock), this protein is Protein Ycf2.